We begin with the raw amino-acid sequence, 364 residues long: Molybdenum import ATP-binding protein ModC (364 aa).

The ABC transporter domain occupies 1-229; the sequence is MLLIDIKKQL…PLMRPWLNAS (229 aa). 31-38 contributes to the ATP binding site; sequence GRSGAGKS. The 68-residue stretch at 293–360 folds into the Mop domain; that stretch reads HSSIRNILPV…IKGVSVTQSD (68 aa).

It belongs to the ABC transporter superfamily. Molybdate importer (TC 3.A.1.8) family. As to quaternary structure, the complex is composed of two ATP-binding proteins (ModC), two transmembrane proteins (ModB) and a solute-binding protein (ModA).

It localises to the cell inner membrane. The enzyme catalyses molybdate(out) + ATP + H2O = molybdate(in) + ADP + phosphate + H(+). Functionally, part of the ABC transporter complex ModABC involved in molybdenum import. Responsible for energy coupling to the transport system. The protein is Molybdenum import ATP-binding protein ModC of Aliivibrio fischeri (strain ATCC 700601 / ES114) (Vibrio fischeri).